Consider the following 304-residue polypeptide: Oxygen-dependent coproporphyrinogen-III oxidase (304 aa).

Ser93 is a binding site for substrate. A divalent metal cation is bound by residues His97 and His107. His107 serves as the catalytic Proton donor. 109–111 (NVR) provides a ligand contact to substrate. A divalent metal cation contacts are provided by His146 and His176. The tract at residues 241–276 (YVEFNLVYDRGTLFGLQSGGRTESILMSLPPQVRWG) is important for dimerization. 259–261 (GGR) is a substrate binding site.

This sequence belongs to the aerobic coproporphyrinogen-III oxidase family. In terms of assembly, homodimer. The cofactor is a divalent metal cation.

It is found in the cytoplasm. The enzyme catalyses coproporphyrinogen III + O2 + 2 H(+) = protoporphyrinogen IX + 2 CO2 + 2 H2O. It functions in the pathway porphyrin-containing compound metabolism; protoporphyrin-IX biosynthesis; protoporphyrinogen-IX from coproporphyrinogen-III (O2 route): step 1/1. In terms of biological role, involved in the heme biosynthesis. Catalyzes the aerobic oxidative decarboxylation of propionate groups of rings A and B of coproporphyrinogen-III to yield the vinyl groups in protoporphyrinogen-IX. The protein is Oxygen-dependent coproporphyrinogen-III oxidase of Pseudomonas syringae pv. tomato (strain ATCC BAA-871 / DC3000).